A 131-amino-acid polypeptide reads, in one-letter code: Photosystem II reaction center Psb28 protein (131 aa).

Residues 110-131 (NGLGYSQNQKSDQTDAATEEQA) form a disordered region. Over residues 112–125 (LGYSQNQKSDQTDA) the composition is skewed to polar residues.

This sequence belongs to the Psb28 family. In terms of assembly, part of the photosystem II complex.

The protein resides in the cellular thylakoid membrane. In Synechococcus sp. (strain CC9902), this protein is Photosystem II reaction center Psb28 protein.